A 355-amino-acid polypeptide reads, in one-letter code: 3-isopropylmalate dehydrogenase (355 aa).

The substrate site is built by arginine 98, arginine 108, arginine 132, and aspartate 223. Positions 223, 247, and 251 each coordinate Mg(2+). 283 to 295 (GSAPDIAGQQKAD) serves as a coordination point for NAD(+).

This sequence belongs to the isocitrate and isopropylmalate dehydrogenases family. LeuB type 2 subfamily. As to quaternary structure, homodimer. Mg(2+) serves as cofactor. Requires Mn(2+) as cofactor.

Its subcellular location is the cytoplasm. It carries out the reaction (2R,3S)-3-isopropylmalate + NAD(+) = 4-methyl-2-oxopentanoate + CO2 + NADH. Its pathway is amino-acid biosynthesis; L-leucine biosynthesis; L-leucine from 3-methyl-2-oxobutanoate: step 3/4. Its function is as follows. Catalyzes the oxidation of 3-carboxy-2-hydroxy-4-methylpentanoate (3-isopropylmalate) to 3-carboxy-4-methyl-2-oxopentanoate. The product decarboxylates to 4-methyl-2 oxopentanoate. This Clavibacter sepedonicus (Clavibacter michiganensis subsp. sepedonicus) protein is 3-isopropylmalate dehydrogenase.